Here is a 549-residue protein sequence, read N- to C-terminus: Glucose-6-phosphate isomerase (549 aa).

Glutamate 355 acts as the Proton donor in catalysis. Catalysis depends on residues histidine 386 and lysine 514.

It belongs to the GPI family.

Its subcellular location is the cytoplasm. The catalysed reaction is alpha-D-glucose 6-phosphate = beta-D-fructose 6-phosphate. Its pathway is carbohydrate biosynthesis; gluconeogenesis. The protein operates within carbohydrate degradation; glycolysis; D-glyceraldehyde 3-phosphate and glycerone phosphate from D-glucose: step 2/4. Catalyzes the reversible isomerization of glucose-6-phosphate to fructose-6-phosphate. This Sodalis glossinidius (strain morsitans) protein is Glucose-6-phosphate isomerase.